The sequence spans 426 residues: MSTLVIVGTQWGDEGKGKITDYLAEKADVVVRYQGGNNAGHTVEKEGVQYKLHLIPSGILYSEKICIIGNGVVVDPASLIEEIENLQKQGISVDNLKISDRAHIVFPYHIKQDELEEISKGKNDLGTTKRGIGPCYMDKSERIGIRVCDLLKPKVFEEKLRRNVEKKNKLFKELYGAEGFDFEEMYQKYLEYAEKIKPFVTDTTVLLYDLIKSGKKVLFEGAQGTLLDLDLGTYPYVTASHPIAGGVTVGAGIGPTMIDEVMGVVKAYTTRVGKGPFPTELFDENGEFLREKGHEYGTTTGRARRCGWLDAVILKYSVRVSGITHFALTKLDTLTGLKKIKICTGYKFNGRIITDFPASLEDLAQCEPVYEEFDGWEEDIQGAKTFDDLPYNAQKYIRRIEELIGIKAAIISVGPERNQTIVLRDF.

GTP contacts are provided by residues 12–18 and 40–42; these read GDEGKGK and GHT. The active-site Proton acceptor is the aspartate 13. Mg(2+) is bound by residues aspartate 13 and glycine 40. IMP-binding positions include 13–16, 38–41, threonine 128, arginine 142, glutamine 223, threonine 238, and arginine 302; these read DEGK and NAGH. Residue histidine 41 is the Proton donor of the active site. A substrate-binding site is contributed by 298 to 304; that stretch reads TTTGRAR. GTP contacts are provided by residues arginine 304, 330-332, and 412-414; these read KLD and SVG.

The protein belongs to the adenylosuccinate synthetase family. As to quaternary structure, homodimer. Requires Mg(2+) as cofactor.

The protein resides in the cytoplasm. The enzyme catalyses IMP + L-aspartate + GTP = N(6)-(1,2-dicarboxyethyl)-AMP + GDP + phosphate + 2 H(+). Its pathway is purine metabolism; AMP biosynthesis via de novo pathway; AMP from IMP: step 1/2. In terms of biological role, plays an important role in the de novo pathway of purine nucleotide biosynthesis. Catalyzes the first committed step in the biosynthesis of AMP from IMP. The protein is Adenylosuccinate synthetase of Thermoanaerobacter pseudethanolicus (strain ATCC 33223 / 39E) (Clostridium thermohydrosulfuricum).